The chain runs to 207 residues: Mediator of RNA polymerase II transcription subunit 18 (207 aa).

This sequence belongs to the Mediator complex subunit 18 family. In terms of assembly, component of the Mediator complex. Interacts with med17, prk1 and rbp1.

It is found in the nucleus. Its function is as follows. Component of the Mediator complex, a coactivator involved in the regulated transcription of nearly all RNA polymerase II-dependent genes. Mediator functions as a bridge to convey information from gene-specific regulatory proteins to the basal RNA polymerase II transcription machinery. Mediator is recruited to promoters by direct interactions with regulatory proteins and serves as a scaffold for the assembly of a functional preinitiation complex with RNA polymerase II and the general transcription factors. The polypeptide is Mediator of RNA polymerase II transcription subunit 18 (med18) (Schizosaccharomyces pombe (strain 972 / ATCC 24843) (Fission yeast)).